A 505-amino-acid polypeptide reads, in one-letter code: Flagellin (505 aa).

This sequence belongs to the bacterial flagellin family.

The protein resides in the secreted. Its subcellular location is the bacterial flagellum. Its function is as follows. Flagellin is the subunit protein which polymerizes to form the filaments of bacterial flagella. This Salmonella muenchen protein is Flagellin (fliC).